Here is a 313-residue protein sequence, read N- to C-terminus: Porphobilinogen deaminase (313 aa).

At C242 the chain carries S-(dipyrrolylmethanemethyl)cysteine.

Belongs to the HMBS family. Monomer. Requires dipyrromethane as cofactor.

The enzyme catalyses 4 porphobilinogen + H2O = hydroxymethylbilane + 4 NH4(+). It participates in porphyrin-containing compound metabolism; protoporphyrin-IX biosynthesis; coproporphyrinogen-III from 5-aminolevulinate: step 2/4. Functionally, tetrapolymerization of the monopyrrole PBG into the hydroxymethylbilane pre-uroporphyrinogen in several discrete steps. The chain is Porphobilinogen deaminase from Pseudomonas putida (strain GB-1).